The chain runs to 312 residues: Ribonuclease Z (312 aa).

Zn(2+) contacts are provided by His63, His65, Asp67, His68, His141, Asp212, and His270. The Proton acceptor role is filled by Asp67.

It belongs to the RNase Z family. Homodimer. The cofactor is Zn(2+).

It carries out the reaction Endonucleolytic cleavage of RNA, removing extra 3' nucleotides from tRNA precursor, generating 3' termini of tRNAs. A 3'-hydroxy group is left at the tRNA terminus and a 5'-phosphoryl group is left at the trailer molecule.. Its function is as follows. Zinc phosphodiesterase, which displays some tRNA 3'-processing endonuclease activity. Probably involved in tRNA maturation, by removing a 3'-trailer from precursor tRNA. The chain is Ribonuclease Z from Lactobacillus acidophilus (strain ATCC 700396 / NCK56 / N2 / NCFM).